A 791-amino-acid polypeptide reads, in one-letter code: Cellobionic acid phosphorylase (791 aa).

Asp-478 acts as the Proton donor in catalysis.

This sequence belongs to the glycosyl hydrolase 94 family. Cellobionic acid phosphorylase subfamily. In terms of assembly, homodimer.

The catalysed reaction is 4-O-beta-D-glucopyranosyl-D-gluconate + phosphate = D-gluconate + alpha-D-glucose 1-phosphate. It functions in the pathway glycan metabolism; cellulose degradation. In terms of biological role, catalyzes the reversible phosphorolysis of cellobionic acid (4-O-beta-D-glucopyranosyl-D-gluconate), a probable step in cellulose degradation. May be part of a metabolic pathway where cellobionic acid is converted into alpha-D-glucose 1-phosphate and D-gluconic acid to enter glycolysis and the pentose phosphate pathway, respectively. Produces 4-O-beta-D-glucopyranosyl-D-glucuronate from alpha-D-glucose 1-phosphate and D-glucuronate with low activity in the synthetic direction. The chain is Cellobionic acid phosphorylase from Neurospora crassa (strain ATCC 24698 / 74-OR23-1A / CBS 708.71 / DSM 1257 / FGSC 987).